A 508-amino-acid chain; its full sequence is MVTTPRLVSLLLLLALCAAAAGALRLPPDASFPGAQAERLIRALNLLPKDSSSSSGRHGARVGEGNEDVAPGQLLERRVTLPGLPEGVADLGHHAGYYRLPNTHDARMFYFFFESRGKKEDPVVIWLTGGPGCSSELAVFYENGPFTIANNMSLVWNKFGWDKISNIIFVDQPTGTGFSYSSDDRDTRHDETGVSNDLYDFLQVFFKKHPEFIKNDFFITGESYAGHYIPAFASRVHQGNKKNEGTHINLKGFAIGNGLTDPAIQYKAYTDYALEMNLIQKADYERINKFIPPCEFAIKLCGTNGKASCMAAYMVCNTIFNSIMKLVGTKNYYDVRKECEGKLCYDFSNLEKFFGDKAVRQAIGVGDIEFVSCSTSVYQAMLTDWMRNLEVGIPALLEDGINVLIYAGEYDLICNWLGNSRWVHSMEWSGQKDFAKTAESSFLVDDAQAGVLKSHGALSFLKVHNAGHMVPMDQPKAALEMLRRFTQGKLKEAVPEEESSTTSFYAAM.

An N-terminal signal peptide occupies residues 1 to 19; that stretch reads MVTTPRLVSLLLLLALCAA. A propeptide spanning residues 20 to 80 is cleaved from the precursor; the sequence is AAGALRLPPD…PGQLLERRVT (61 aa). Residues 48-67 are disordered; it reads PKDSSSSSGRHGARVGEGNE. Residue Leu81 is modified to Blocked amino end (Leu). Intrachain disulfides connect Cys133/Cys373, Cys301/Cys316, and Cys339/Cys344. A glycan (N-linked (GlcNAc...) asparagine) is linked at Asn151. The active site involves Ser223. Asp411 is an active-site residue. Substrate is bound at residue Cys414. His468 is an active-site residue. Residues 492 to 508 constitute a propeptide that is removed on maturation; the sequence is EAVPEEESSTTSFYAAM.

Belongs to the peptidase S10 family. Monomer.

It localises to the secreted. The catalysed reaction is Release of a C-terminal amino acid with broad specificity.. Inhibited by mercuric ions. This Hordeum vulgare (Barley) protein is Serine carboxypeptidase 3 (CBP3).